A 156-amino-acid polypeptide reads, in one-letter code: Small ribosomal subunit protein uS7 (156 aa).

Belongs to the universal ribosomal protein uS7 family. In terms of assembly, part of the 30S ribosomal subunit. Contacts proteins S9 and S11.

Functionally, one of the primary rRNA binding proteins, it binds directly to 16S rRNA where it nucleates assembly of the head domain of the 30S subunit. Is located at the subunit interface close to the decoding center, probably blocks exit of the E-site tRNA. In Chromohalobacter salexigens (strain ATCC BAA-138 / DSM 3043 / CIP 106854 / NCIMB 13768 / 1H11), this protein is Small ribosomal subunit protein uS7.